A 1375-amino-acid chain; its full sequence is Protein lingerer (1375 aa).

A disordered region spans residues 1 to 69 (MSTQTRSGGG…KAQPKATTEQ (69 aa)). Over residues 53 to 62 (SKTDKPEKAQ) the composition is skewed to basic and acidic residues. Residues 84-124 (QINEKVLLLLTMTQRSEEEVCCALNECDYDLEAAANFLIEE) enclose the UBA domain. 2 stretches are compositionally biased toward low complexity: residues 142-161 (ANNT…GNGN) and 173-184 (SNRGGTRGSSDS). Residues 142–286 (ANNTADGAAG…GSGRGGNANE (145 aa)) are disordered. Residues 185–204 (RGWRGRETRENERNQRESRE) are compositionally biased toward basic and acidic residues. Residues 228–282 (RNGGGRSGPGGGGRGGGFVSRSGRGGGRMGGRTGGPRGDRGSGGPGGAYGSGRGG) show a composition bias toward gly residues. Tyr321 carries the phosphotyrosine modification. Ser324 is subject to Phosphoserine. 2 stretches are compositionally biased toward polar residues: residues 374-387 (VQQG…SSSG) and 395-412 (ATLS…SAAV). 2 disordered regions span residues 374 to 453 (VQQG…ASPD) and 613 to 646 (FEPL…QQQQ). The span at 426 to 441 (SGAGTGASAAAGGGAG) shows a compositional bias: gly residues. Low complexity-rich tracts occupy residues 442–453 (STPSSFVSASPD) and 629–646 (QQQQ…QQQQ). Ser672 bears the Phosphoserine mark. Thr673 is subject to Phosphothreonine. Phosphoserine is present on Ser674. Residues 750–767 (QGYGSYQPSSYQQQAGSG) show a composition bias toward low complexity. 5 disordered regions span residues 750 to 801 (QGYG…SGNA), 869 to 894 (SVST…GQTG), 987 to 1036 (KNTS…GGSG), 1203 to 1234 (SKGG…DLTS), and 1251 to 1277 (EKQS…TSAQ). Over residues 768 to 781 (AQSGTGAVSGGGGT) the composition is skewed to gly residues. 3 stretches are compositionally biased toward low complexity: residues 789 to 801 (GGSS…SGNA), 869 to 882 (SVST…NSGS), and 987 to 1008 (KNTS…TGNA). The segment covering 1009–1036 (SGQGAGASTGGVGSSSGAGGAGSGGGSG) has biased composition (gly residues). Residues 1265-1277 (MPNTQTAGGTSAQ) show a composition bias toward polar residues.

As to expression, at stage 11, expression is restricted to the neuroblasts, predominant in the central nervous system (CNS), including the brain and ventral nerve cord, and in the PNS. Later embryonic expression is seen in the gonads. Late third instar larvae show expression in the CNS, imaginal disks (including genital, eye-antennal, leg, wing and haltere disks), and gonads. In the larval brain, it is expressed in all of the glial cells and in clusters of neurons that projected contralaterally. In the larval ventral ganglion, it is expressed in subperineurial glia, peripheral exit glia, and a number of interneurons, but not in motor neurons. Isoform B is abundantly expressed in males and females. Isoform D is male specific and expressed at low levels.

Its subcellular location is the cytoplasm. Functionally, acts in the nervous system to mediate the control of copulatory organs during courtship. In Drosophila melanogaster (Fruit fly), this protein is Protein lingerer.